Here is a 418-residue protein sequence, read N- to C-terminus: 26S proteasome regulatory subunit 6B (418 aa).

An N-acetylmethionine modification is found at Met1. The residue at position 21 (Ser21) is a Phosphoserine. The residue at position 25 (Thr25) is a Phosphothreonine. Ser28 carries the post-translational modification Phosphoserine. An ATP-binding site is contributed by 206–213; that stretch reads GPPGCGKT. N6-acetyllysine is present on residues Lys397 and Lys401.

This sequence belongs to the AAA ATPase family. Component of the 19S proteasome regulatory particle complex. The 26S proteasome consists of a 20S core particle (CP) and two 19S regulatory subunits (RP). The regulatory particle is made of a lid composed of 9 subunits, a base containing 6 ATPases including PSMC4 and few additional components. Interacts with NR1I3. Interacts with PAAF1. Interacts with TRIM5. Interacts with ZFAND1.

It is found in the cytoplasm. It localises to the nucleus. Its function is as follows. Component of the 26S proteasome, a multiprotein complex involved in the ATP-dependent degradation of ubiquitinated proteins. This complex plays a key role in the maintenance of protein homeostasis by removing misfolded or damaged proteins, which could impair cellular functions, and by removing proteins whose functions are no longer required. Therefore, the proteasome participates in numerous cellular processes, including cell cycle progression, apoptosis, or DNA damage repair. PSMC4 belongs to the heterohexameric ring of AAA (ATPases associated with diverse cellular activities) proteins that unfolds ubiquitinated target proteins that are concurrently translocated into a proteolytic chamber and degraded into peptides. The chain is 26S proteasome regulatory subunit 6B (PSMC4) from Bos taurus (Bovine).